We begin with the raw amino-acid sequence, 576 residues long: Catalase-peroxidase (576 aa).

Positions 95 to 224 form a cross-link, tryptophyl-tyrosyl-methioninium (Trp-Tyr) (with M-250); it reads WHAAGSYRAA…LAAVQMGLIY (130 aa). Histidine 96 (proton acceptor) is an active-site residue. A cross-link (tryptophyl-tyrosyl-methioninium (Tyr-Met) (with W-95)) is located at residues 224–250; that stretch reads YVNPEGVNGQPDPARTALHIRETFARM. Heme b is bound at residue histidine 265.

The protein belongs to the peroxidase family. Peroxidase/catalase subfamily. As to quaternary structure, homotetramer. Heme b serves as cofactor. In terms of processing, formation of the three residue Trp-Tyr-Met cross-link is important for the catalase, but not the peroxidase activity of the enzyme.

It carries out the reaction H2O2 + AH2 = A + 2 H2O. It catalyses the reaction 2 H2O2 = O2 + 2 H2O. Functionally, bifunctional enzyme with both catalase and broad-spectrum peroxidase activity. Also displays NADH oxidase, INH lyase and isonicotinoyl-NAD synthase activities. Important for stationary phase survival. This Rhodobacter capsulatus (Rhodopseudomonas capsulata) protein is Catalase-peroxidase (katG).